The primary structure comprises 312 residues: Protoheme IX farnesyltransferase (312 aa).

8 helical membrane passes run 34-54, 56-76, 119-139, 152-172, 179-199, 225-245, 247-267, and 283-303; these read LVIF…HPVL, FTAI…NMAL, ALVN…YVVI, IVIG…AATG, LLLF…LALF, ILLY…LGYF, WVYG…AINV, and LFAF…LDVL.

This sequence belongs to the UbiA prenyltransferase family. Protoheme IX farnesyltransferase subfamily.

It is found in the cell inner membrane. The enzyme catalyses heme b + (2E,6E)-farnesyl diphosphate + H2O = Fe(II)-heme o + diphosphate. Its pathway is porphyrin-containing compound metabolism; heme O biosynthesis; heme O from protoheme: step 1/1. Its function is as follows. Converts heme B (protoheme IX) to heme O by substitution of the vinyl group on carbon 2 of heme B porphyrin ring with a hydroxyethyl farnesyl side group. The chain is Protoheme IX farnesyltransferase from Nitrobacter hamburgensis (strain DSM 10229 / NCIMB 13809 / X14).